The sequence spans 180 residues: NAD(P)H-quinone oxidoreductase subunit I, chloroplastic (180 aa).

4Fe-4S ferredoxin-type domains follow at residues 55–84 (GRIH…VNWR) and 95–124 (LNYS…MTEE). [4Fe-4S] cluster-binding residues include C64, C67, C70, C74, C104, C107, C110, and C114.

It belongs to the complex I 23 kDa subunit family. In terms of assembly, NDH is composed of at least 16 different subunits, 5 of which are encoded in the nucleus. [4Fe-4S] cluster is required as a cofactor.

The protein resides in the plastid. Its subcellular location is the chloroplast thylakoid membrane. The enzyme catalyses a plastoquinone + NADH + (n+1) H(+)(in) = a plastoquinol + NAD(+) + n H(+)(out). The catalysed reaction is a plastoquinone + NADPH + (n+1) H(+)(in) = a plastoquinol + NADP(+) + n H(+)(out). Its function is as follows. NDH shuttles electrons from NAD(P)H:plastoquinone, via FMN and iron-sulfur (Fe-S) centers, to quinones in the photosynthetic chain and possibly in a chloroplast respiratory chain. The immediate electron acceptor for the enzyme in this species is believed to be plastoquinone. Couples the redox reaction to proton translocation, and thus conserves the redox energy in a proton gradient. The sequence is that of NAD(P)H-quinone oxidoreductase subunit I, chloroplastic from Platanus occidentalis (Sycamore).